A 1942-amino-acid polypeptide reads, in one-letter code: Myosin-1 (1942 aa).

In terms of domain architecture, Myosin N-terminal SH3-like spans 33 to 82 (DAKSSVFVVDAKESFVKATVQSREGGKVTAKTEGGTTVTVKDDQVYPMNP). Serine 36 is modified (phosphoserine). Residues threonine 64 and threonine 69 each carry the phosphothreonine modification. Residues 86-785 (DKIEDMAMMT…LLGLLEEMRD (700 aa)) form the Myosin motor domain. Position 130 is an N6,N6,N6-trimethyllysine (lysine 130). Residue 179-186 (GESGAGKT) coordinates ATP. The residue at position 389 (tyrosine 389) is a Phosphotyrosine. Threonine 419 is modified (phosphothreonine). A Phosphotyrosine modification is found at tyrosine 424. Serine 625 is subject to Phosphoserine. Positions 662–684 (LNKLMTNLRSTHPHFVRCIIPNE) are actin-binding. Residue histidine 760 is modified to Pros-methylhistidine. An actin-binding region spans residues 764–778 (KFGHTKVFFKAGLLG). An IQ domain is found at 788–817 (LAQLITRTQAMCRGYLARVEYQKMVERRES). Residues 846–1942 (LLKSAETEKE…EVHTKIISEE (1097 aa)) are a coiled coil. Residues serine 1095, serine 1099, serine 1165, serine 1240, and serine 1246 each carry the phosphoserine modification. Residues 1156–1175 (RLEEAGGATSAQIEMNKKRE) are disordered. Threonine 1258 is modified (phosphothreonine). Residue serine 1264 is modified to Phosphoserine. Residues threonine 1268 and threonine 1289 each carry the phosphothreonine modification. Serine 1291, serine 1295, serine 1306, and serine 1309 each carry phosphoserine. Tyrosine 1467 bears the Phosphotyrosine mark. A Phosphothreonine modification is found at threonine 1470. Serine 1477 is subject to Phosphoserine. Tyrosine 1495 carries the post-translational modification Phosphotyrosine. Serine 1498 carries the post-translational modification Phosphoserine. At threonine 1504 the chain carries Phosphothreonine. Serine 1517 is subject to Phosphoserine. Threonine 1520 carries the phosphothreonine modification. Phosphoserine is present on residues serine 1545, serine 1557, serine 1577, serine 1603, serine 1606, serine 1717, and serine 1729. Threonine 1733 and threonine 1739 each carry phosphothreonine. Serine 1742 is modified (phosphoserine).

The protein belongs to the TRAFAC class myosin-kinesin ATPase superfamily. Myosin family. Muscle myosin is a hexameric protein that consists of 2 heavy chain subunits (MHC), 2 alkali light chain subunits (MLC) and 2 regulatory light chain subunits (MLC-2). Interacts with SLC26A5. As to expression, expressed in the cochlea (at protein level). Strongly expressed in spiral ganglion neurons with axonal sprouts and supporting cells around hair cells. In the organ of Corti, it is expressed in inner and outer hair cells, and in supporting cells.

It localises to the cytoplasm. Its subcellular location is the myofibril. Functionally, required for normal hearing. It plays a role in cochlear amplification of auditory stimuli, likely through the positive regulation of prestin (SLC26A5) activity and outer hair cell (OHC) electromotility. The sequence is that of Myosin-1 from Mus musculus (Mouse).